We begin with the raw amino-acid sequence, 92 residues long: Small ribosomal subunit protein uS19 (92 aa).

It belongs to the universal ribosomal protein uS19 family.

In terms of biological role, protein S19 forms a complex with S13 that binds strongly to the 16S ribosomal RNA. The protein is Small ribosomal subunit protein uS19 of Psychromonas ingrahamii (strain DSM 17664 / CCUG 51855 / 37).